The primary structure comprises 427 residues: MSTSFENKATNRGVITFTISQDKIKPALDQAFNKIKKDLNAPGFRKGHMPRPVFNQRFGEEVLYEEALNIVLPAAYEGAVAELELDVVAQPKIDVVSMEKGQEWTLTAEVVTKPEVKLGDYKDLTVEVEASKEVTDEEVDAKVERERNNLAELVVKEDAAVEGDTVVIDFVGSVDGVEFDGGKGDNFSLELGSGQFIPGFEEQLVGAKAGDTVEVNVTFPENYQAEDLAGKAAKFVTTVHEVKAKEVPELDDELAKDIDEEVETLDELKAKYRKELEASKEAAYDDALEGAAIELAVENAEIVELPEEMVHDEVHRSVNEFMASMQRQGISPDMYFQLTGTSQEDLHKQHEAEADKRVKTNLVIEAIAKAEGFEASDDEIEKEINDLAAEYSMPVEQVRSLLSADMLKHDIVMKKAVEVITSSAKAK.

Residues 163–248 (GDTVVIDFVG…VHEVKAKEVP (86 aa)) form the PPIase FKBP-type domain.

Belongs to the FKBP-type PPIase family. Tig subfamily.

The protein resides in the cytoplasm. The enzyme catalyses [protein]-peptidylproline (omega=180) = [protein]-peptidylproline (omega=0). Its function is as follows. Involved in protein export. Acts as a chaperone by maintaining the newly synthesized protein in an open conformation. Functions as a peptidyl-prolyl cis-trans isomerase. In Streptococcus equi subsp. zooepidemicus (strain H70), this protein is Trigger factor.